Consider the following 957-residue polypeptide: MTKPVLVLVGHGMVGHHFLEQCVSRDLHQQYRIVVFCEERYAAYDRVHLTEYFAGRSAESLSLVEGDFFTQHGIELRLSESVASIDREARVVRDAFGHETHWDKLVLATGSYPFVPPVPGHNLEGCFVYRTLDDLDQIAARAATARRGVVIGGGLLGLEAANALKQLGLETHVVEFAPNLMAVQLDNGGAAMLREKISELGVGVHTSKATTEIVRNEQGLQLNFRDGSSLATDMLVFSAGIRPQDALARSGGLSVGERGGICIDNQCRTSDPDVLAIGECALWENKIYGLVAPGYQMAARRAATLAGEAGSFSGADMSTKLKLLGVDVASFGDAQGRTPGCQSYQWTHGPQQVYKKIVVSADGKNLLGGVLVGDAGDYATLLQMMLNGMALPKHPESLILPALEGSRPKALGVAALPDGAQICSCHNVSKGDICQAVSGGAGDMAAIKSRTKAATGCGGCSALVKQVMEYQLAEQGVEVKKDICEHFPWSRQEIYHLVRVNHIRTFEQLIARYGQGHGCEVCKPLVASVLASCWNEYLLKPAHLPLQDTNDRYFANIQKDGTYSVVPRMAAGEVTPDGLIAIGQIAKRYQLYSKVTGGQRIDLFGARLEQLPAIWRELAEAGFETGHAYGKSLRTVKSCVGSTWCRYGVQDSTGLAVTLEHRYKGLRAPHKIKMAVSGCTRECAEAQGKDIGVIATEKGWNLYVCGNGGMKPRHADLFASDLDEATLIRSIDRLLMFYIRTADRLQRTSTWMDNLEGGVDYLREMILEDSLGIGEELEQEMARVVESYQCEWQTTLNDPQRLALFRSYVNSDEPDETVQRQTLRGQPQLAPFAAQGEPALPSRPWQAICDLDAIPQQAGIGARLGERQIALFRFGDQVYALDNLEPGSEANVLSRGLLGDAGGEPIVISPLYKQRIRLRDGRQCDGGEQAVRAWPVKVENGKVWVGNQQLLARAEAS.

44-79 (YDRVHLTEYFAGRSAESLSLVEGDFFTQHGIELRLS) contributes to the FAD binding site. Position 193–225 (193–225 (LREKISELGVGVHTSKATTEIVRNEQGLQLNFR)) interacts with NAD(+). [2Fe-2S] cluster is bound by residues Cys423, Cys425, Cys457, and Cys460. The [4Fe-4S] cluster site is built by Cys639, Cys645, Cys679, and Cys683. Cys683 is a binding site for siroheme.

The protein belongs to the nitrite and sulfite reductase 4Fe-4S domain family. In terms of assembly, homodimer which associates with NirD. Siroheme serves as cofactor. It depends on [2Fe-2S] cluster as a cofactor. The cofactor is [4Fe-4S] cluster. FAD is required as a cofactor.

The catalysed reaction is NH4(+) + 3 NADP(+) + 2 H2O = nitrite + 3 NADPH + 5 H(+). It catalyses the reaction NH4(+) + 3 NAD(+) + 2 H2O = nitrite + 3 NADH + 5 H(+). It functions in the pathway nitrogen metabolism; nitrate reduction (assimilation). The polypeptide is Nitrite reductase [NAD(P)H] large subunit (nasB) (Klebsiella oxytoca).